The primary structure comprises 179 residues: Hypoxanthine-guanine phosphoribosyltransferase (179 aa).

The diphosphate site is built by K42 and G43. 2 residues coordinate Mg(2+): E98 and D99. E102 (proton acceptor) is an active-site residue. GMP-binding positions include K130, 151–152 (FV), and D158. R164 is a diphosphate binding site.

It belongs to the purine/pyrimidine phosphoribosyltransferase family. It depends on Mg(2+) as a cofactor.

The protein localises to the cytoplasm. The enzyme catalyses IMP + diphosphate = hypoxanthine + 5-phospho-alpha-D-ribose 1-diphosphate. It carries out the reaction GMP + diphosphate = guanine + 5-phospho-alpha-D-ribose 1-diphosphate. It functions in the pathway purine metabolism; IMP biosynthesis via salvage pathway; IMP from hypoxanthine: step 1/1. It participates in purine metabolism; GMP biosynthesis via salvage pathway; GMP from guanine: step 1/1. Functionally, purine salvage pathway enzyme that catalyzes the transfer of the ribosyl-5-phosphate group from 5-phospho-alpha-D-ribose 1-diphosphate (PRPP) to the N9 position of the 6-oxopurines hypoxanthine and guanine to form the corresponding ribonucleotides IMP (inosine 5'-monophosphate) and GMP (guanosine 5'-monophosphate), with the release of PPi. This is Hypoxanthine-guanine phosphoribosyltransferase (hpt) from Staphylococcus aureus (strain COL).